The following is a 351-amino-acid chain: Probable minor fimbrial subunit LpfD (351 aa).

The N-terminal stretch at 1–22 (MKAAIALSLLGCVFGFSGKAFA) is a signal peptide.

It belongs to the fimbrial protein family.

The protein resides in the fimbrium. Part of the lpfABCC'DE fimbrial operon. LP fimbriae may participate in the interaction with eukaryotic cells by assisting in microcolony formation. This Escherichia coli O157:H7 protein is Probable minor fimbrial subunit LpfD (lpfD).